Consider the following 418-residue polypeptide: Secreted aspartic protease 6 (418 aa).

A signal peptide spans 1-18 (MFLKNILSVLRFALLIDA). The propeptide at 19–76 (APVKRSPGFVTLDFNVKRSLVVPDDPTAESKRSPLFLDLDPTQIPVDDTGRNVGVDKR) is activation peptide. Positions 90–404 (YSADITVGSN…DLDDKKISMA (315 aa)) constitute a Peptidase A1 domain. Residue Asp108 is part of the active site. 108–110 (DTG) lines the pepstatin A pocket. A disulfide bridge connects residues Cys123 and Cys135. N-linked (GlcNAc...) asparagine glycosylation occurs at Asn138. A Zn(2+)-binding site is contributed by Asp268. Asp294 is a catalytic residue. Position 294–298 (294–298 (DSGTT)) interacts with pepstatin A. Cys332 and Cys370 are disulfide-bonded.

The protein belongs to the peptidase A1 family.

The protein resides in the secreted. It catalyses the reaction Preferential cleavage at the carboxyl of hydrophobic amino acids, but fails to cleave 15-Leu-|-Tyr-16, 16-Tyr-|-Leu-17 and 24-Phe-|-Phe-25 of insulin B chain. Activates trypsinogen, and degrades keratin.. Its activity is regulated as follows. Inhibited by pepstatin A analogs. Functionally, secreted aspartic peptidases (SAPs) are a group of ten acidic hydrolases considered as key virulence factors. These enzymes supply the fungus with nutrient amino acids as well as are able to degrade the selected host's proteins involved in the immune defense. Moreover, acts toward human hemoglobin though limited proteolysis to generate a variety of antimicrobial hemocidins, enabling to compete with the other microorganisms of the same physiological niche using the microbicidal peptides generated from the host protein. This is Secreted aspartic protease 6 from Candida albicans (Yeast).